Here is an 89-residue protein sequence, read N- to C-terminus: Small ribosomal subunit protein uS15 (89 aa).

Belongs to the universal ribosomal protein uS15 family. As to quaternary structure, part of the 30S ribosomal subunit. Forms a bridge to the 50S subunit in the 70S ribosome, contacting the 23S rRNA.

In terms of biological role, one of the primary rRNA binding proteins, it binds directly to 16S rRNA where it helps nucleate assembly of the platform of the 30S subunit by binding and bridging several RNA helices of the 16S rRNA. Its function is as follows. Forms an intersubunit bridge (bridge B4) with the 23S rRNA of the 50S subunit in the ribosome. The chain is Small ribosomal subunit protein uS15 from Tolumonas auensis (strain DSM 9187 / NBRC 110442 / TA 4).